The sequence spans 280 residues: Succinate dehydrogenase [ubiquinone] iron-sulfur subunit, mitochondrial (280 aa).

The N-terminal 28 residues, 1–28 (MAAVVALSLRRRLPATTLGGACLQASRG), are a transit peptide targeting the mitochondrion. A 2Fe-2S ferredoxin-type domain is found at 40-133 (KKFAIYRWDP…VSKIYPLPHM (94 aa)). K51 and K55 each carry N6-acetyllysine. Positions 93, 98, 101, and 113 each coordinate [2Fe-2S] cluster. Positions 146 to 218 (FYAQYKSIEP…PAVLMQAYRW (73 aa)) are interaction with SDHAF1. Residues 176-206 (EREKLDGLYECILCACCSTSCPSYWWNGDKY) form the 4Fe-4S ferredoxin-type domain. [4Fe-4S] cluster contacts are provided by C186, C189, and C192. C196 is a binding site for [3Fe-4S] cluster. Residue W201 participates in a ubiquinone binding. [3Fe-4S] cluster contacts are provided by C243 and C249. C253 is a binding site for [4Fe-4S] cluster.

This sequence belongs to the succinate dehydrogenase/fumarate reductase iron-sulfur protein family. In terms of assembly, component of complex II composed of four subunits: the flavoprotein (FP) SDHA, iron-sulfur protein (IP) SDHB, and a cytochrome b560 composed of SDHC and SDHD. Interacts with SDHAF1; the interaction is required for iron-sulfur cluster incorporation into SDHB. As to quaternary structure, (Microbial infection) Interacts with JC virus small t antigen. Requires [2Fe-2S] cluster as cofactor. [3Fe-4S] cluster is required as a cofactor. [4Fe-4S] cluster serves as cofactor.

The protein resides in the mitochondrion inner membrane. It catalyses the reaction a quinone + succinate = fumarate + a quinol. The enzyme catalyses (R)-malate + a quinone = enol-oxaloacetate + a quinol. It carries out the reaction (S)-malate + a quinone = enol-oxaloacetate + a quinol. The protein operates within carbohydrate metabolism; tricarboxylic acid cycle; fumarate from succinate (eukaryal route): step 1/1. With respect to regulation, enol-oxaloacetate inhibits the succinate dehydrogenase activity. Functionally, iron-sulfur protein (IP) subunit of the succinate dehydrogenase complex (mitochondrial respiratory chain complex II), responsible for transferring electrons from succinate to ubiquinone (coenzyme Q). SDH also oxidizes malate to the non-canonical enol form of oxaloacetate, enol-oxaloacetate. Enol-oxaloacetate, which is a potent inhibitor of the succinate dehydrogenase activity, is further isomerized into keto-oxaloacetate. This Homo sapiens (Human) protein is Succinate dehydrogenase [ubiquinone] iron-sulfur subunit, mitochondrial (SDHB).